The following is a 127-amino-acid chain: Fluoride-specific ion channel FluC (127 aa).

The next 4 helical transmembrane spans lie at 4–24 (FTLLGFIALGGAFGACSRYLI), 35–55 (GFPYGTLTVNVIGSLLMGILM), 71–91 (IIGLGFLGALTTFSTFSMDNV), and 99–119 (FIKAGLNILLNVALSITACFI). The Na(+) site is built by glycine 78 and threonine 81.

It belongs to the fluoride channel Fluc/FEX (TC 1.A.43) family.

It localises to the cell inner membrane. It catalyses the reaction fluoride(in) = fluoride(out). With respect to regulation, na(+) is not transported, but it plays an essential structural role and its presence is essential for fluoride channel function. In terms of biological role, fluoride-specific ion channel. Important for reducing fluoride concentration in the cell, thus reducing its toxicity. The chain is Fluoride-specific ion channel FluC from Photobacterium profundum (strain SS9).